A 1015-amino-acid chain; its full sequence is DNA ligase 3 (1015 aa).

Residues 94 to 186 form a PARP-type zinc finger; it reads FCVDYAKRGT…QISQHIADLS (93 aa). Zn(2+) is bound by residues C106, C109, H140, and C143. A phosphoserine mark is found at S211, S217, S228, and S244. The interval 229 to 255 is disordered; it reads GFSAAKPNNSEQAPSSPAPGTSLSASK. Residues 234–253 show a composition bias toward polar residues; it reads KPNNSEQAPSSPAPGTSLSA. Interaction with DNA regions lie at residues 279 to 282, 323 to 328, 393 to 396, and 426 to 432; these read PSYN, VYNLND, TKED, and KMNSGAK. E511 is an ATP binding site. Catalysis depends on K513, which acts as the N6-AMP-lysine intermediate. ATP-binding residues include R518 and R533. Mg(2+) is bound by residues E565 and E660. Positions 665, 676, and 680 each coordinate ATP. The interval 849 to 926 is disordered; it reads DEASPTTGGS…KSSPVKVGMK (78 aa). The segment covering 854–884 has biased composition (low complexity); sequence TTGGSSGENEGTAGSAGPCKGPPSKSSASAK. The residue at position 919 (S919) is a Phosphoserine. In terms of domain architecture, BRCT spans 939-1015; it reads VLLDVFTGVR…IRKRRLIAPC (77 aa).

It belongs to the ATP-dependent DNA ligase family. As to quaternary structure, isoform 3 interacts (via BRCT domain) with the nuclear DNA-repair protein XRCC1. Interacts with POLG. Interacts with POLB. Requires Mg(2+) as cofactor. As to expression, the alpha isoform is expressed in all tissues, while the beta isoform is expressed only in the testis.

It is found in the nucleus. The catalysed reaction is ATP + (deoxyribonucleotide)n-3'-hydroxyl + 5'-phospho-(deoxyribonucleotide)m = (deoxyribonucleotide)n+m + AMP + diphosphate.. Functionally, the alpha isoform interacts with DNA-repair protein XRCC1 and can correct defective DNA strand-break repair and sister chromatid exchange following treatment with ionizing radiation and alkylating agents. The beta isoform does not interact with XRCC1 and may be specifically involved in the completion of homologous recombination events that occur during meiotic prophase. In Mus musculus (Mouse), this protein is DNA ligase 3 (Lig3).